Reading from the N-terminus, the 961-residue chain is Rho guanine nucleotide exchange factor 2 (961 aa).

A Phorbol-ester/DAG-type zinc finger spans residues 12-59 (GHLFTTISVSGMTMCYACNKSITAKEALICPTCNVTIHNRCKDTLANC). Residues serine 82, serine 95, serine 102, serine 106, serine 110, serine 124, serine 136, serine 145, serine 147, and serine 150 each carry the phosphoserine modification. The interval 104 to 134 (RQSLLGSRRGRSPLSLAKSVSTTNIAGHFND) is interaction with DYNLT1. Positions 209 to 406 (KQQDVIYELI…KELLSNVDQD (198 aa)) constitute a DH domain. Lysine 327 is subject to N6-acetyllysine. The 100-residue stretch at 446 to 545 (KLIHDGCLLW…WIRVIQQSVR (100 aa)) folds into the PH domain. Residues 561–588 (EAYLRRIKMELQQKDRALVELLQEKVGL) are a coiled coil. A phosphoserine mark is found at serine 619 and serine 622. Threonine 653 bears the Phosphothreonine; by MAPK1 or MAPK3 mark. Positions 659 to 679 (LPVETDSGGNTSPGVTANGEA) are disordered. Serine 665, serine 670, serine 685, and serine 756 each carry phosphoserine. Basic and acidic residues predominate over residues 742–761 (PEGPERREKLTRANSRDGEA). The disordered stretch occupies residues 742 to 770 (PEGPERREKLTRANSRDGEAGRAGAAPVA). The stretch at 772 to 841 (EKQATELALL…RQLAALGHTE (70 aa)) forms a coiled coil. At serine 860 the chain carries Phosphoserine; by PAK1 and AURKA. Residues 867-961 (LYLSFTPPQP…RDGEPVASES (95 aa)) form a disordered region. Tyrosine 868 carries the phosphotyrosine modification. The residue at position 870 (serine 870) is a Phosphoserine; by PAK4. Residues 894-913 (RPFEDRERQELGSPDERLQD) are compositionally biased toward basic and acidic residues. A phosphoserine mark is found at serine 906, serine 914, and serine 915. A compositionally biased stretch (acidic residues) spans 915-925 (SDPDTGSEEEG). Residue threonine 919 is modified to Phosphothreonine. Residues serine 921, serine 927, serine 928, and serine 931 each carry the phosphoserine modification. At serine 935 the chain carries Phosphoserine; by CDK1.

In terms of assembly, found in a complex composed at least of ARHGEF2, NOD2 and RIPK2. Interacts with RIPK2; the interaction mediates tyrosine phosphorylation of RIPK2 by Src kinase CSK. Interacts with RIPK1 and RIPK3. Interacts with YWHAZ/14-3-3 zeta; when phosphorylated at Ser-860. Interacts with the kinases PAK4, AURKA and MAPK1. Interacts with RHOA and RAC1. Interacts with NOD1. Interacts (via the N- terminal zinc finger) with CAPN6 (via domain II). Interacts with DYNLT1. Post-translationally, phosphorylation of Ser-860 by PAK1 induces binding to protein YWHAZ, promoting its relocation to microtubules and the inhibition of its activity. Phosphorylated by AURKA and CDK1 during mitosis, which negatively regulates its activity. Phosphorylation by MAPK1 or MAPK3 increases nucleotide exchange activity. Phosphorylation by PAK4 releases GEF-H1 from the microtubules. Phosphorylated on serine, threonine and tyrosine residues in a RIPK2-dependent manner.

The protein resides in the cytoplasm. It localises to the cytoskeleton. Its subcellular location is the cell junction. The protein localises to the tight junction. It is found in the golgi apparatus. The protein resides in the spindle. It localises to the cytoplasmic vesicle. Functionally, activates Rho-GTPases by promoting the exchange of GDP for GTP. May be involved in epithelial barrier permeability, cell motility and polarization, dendritic spine morphology, antigen presentation, leukemic cell differentiation, cell cycle regulation, innate immune response, and cancer. Binds Rac-GTPases, but does not seem to promote nucleotide exchange activity toward Rac-GTPases. May stimulate instead the cortical activity of Rac. Inactive toward CDC42, TC10, or Ras-GTPases. Forms an intracellular sensing system along with NOD1 for the detection of microbial effectors during cell invasion by pathogens. Involved in innate immune signaling transduction pathway promoting cytokine IL6/interleukin-6 and TNF-alpha secretion in macrophage upon stimulation by bacterial peptidoglycans; acts as a signaling intermediate between NOD2 receptor and RIPK2 kinase. Contributes to the tyrosine phosphorylation of RIPK2 through Src tyrosine kinase leading to NF-kappaB activation by NOD2. Overexpression activates Rho-, but not Rac-GTPases, and increases paracellular permeability. Involved in neuronal progenitor cell division and differentiation. Involved in the migration of precerebellar neurons. This is Rho guanine nucleotide exchange factor 2 (ARHGEF2) from Sus scrofa (Pig).